Consider the following 781-residue polypeptide: MRNNIAGPPITPVQATVKVTRVRQMDPTDLMSMKILLNILLRRTFESSLGMLNIRSGFYDLRNPSIHAIQIDGRGYDICWIPGFRLTTATLRGKLGLQILPETTKVRSKSMNELLTERRGNIHPSALAVITVMAMHNGKVFRVHSIVQGQTIVSPLANGNETDYFTYYSTRYRDKIDSAGLSLLRHNDYCNSVMQQDKFILKLTPLKRTQNGKVVRPCNVPSSLCIIISDNEIAPYGVSKLSTNRAAVALSTMSPDALLEKATAFAARLAEDTELQSLLGDYGFGFTSNPLELETFVCKPPKLMMDNTSRIVTIEDDSGGVFHNLLQSPGVSPIYYSNNNQPATGMPVWAIMVPRNLGNDYARRLRKELTERVRSLAGTTAPNIGDPPLIAVELSNQRREMYRVEPYKDAFKALLNKLRLEYKDARESEIVAKIQLVVIVIPGPKQDRGDLYKGIKQFYTHMGIVTQCLLAPKSSQNELQWYDQAVLRSVCQQIYAKAGGAVWAPVLPPQNVYSKSTMLCALDISRPKKTVGRPAEVPISTAGFISTYDGSFEYIYSQKKTLVPNRLNHGGELQQQTLMEAFIKNSCNVYLAFNNRILPDHIVIFRDGVSDSQISATLEVEIKSLYECLRQIYHKSNRPMCDLKVIVAQKTCAMRFSAVGGTVLRSGYYVINRSPDNRQQGSEFLMASQAIVHGTTPKPIRYKIIFDSMEASVDNDSFNQLIELTNAMAYGYVNWPQAISLPHVLHMAHHLSKFCGEVLRNGDDLFESCAIFGLQYRPFFI.

Residues Ser110–Met194 enclose the PAZ domain. The 325-residue stretch at Leu436–Arg760 folds into the Piwi domain.

It belongs to the argonaute family. Ago subfamily. Interacts with miR2. Highly specific binding to the mRNA m7G-cap. May be a component of the RNA-induced silencing complex (RISC), a sequence-specific, multicomponent nuclease that destroys or silences messenger RNAs homologous to the silencing trigger.

Its subcellular location is the cytoplasm. Its function is as follows. Plays an essential role in growth and, with Dicer, also involved in microRNA (miRNA)-mediated translational repression. The RNA interference pathway is implicated in antigenic variation having a role in regulation of variant-specific surface protein (VSP)-coding gene expression. Several VSP genes are transcribed but only transcripts encoding the VSP to be expressed accumulate. Antisense RNAs corresponding to the silenced VSP genes are detected. This is Protein argonaute from Giardia intestinalis (Giardia lamblia).